A 395-amino-acid polypeptide reads, in one-letter code: MTWKYDVVVVGSGIAGPIVARNVAKAGFSVLLIDKKWAIGTPKQCAEAISIKVFDKYDIPYDKRFINREIYGAKLYSPSGYELEMRYKEVSGVILERKVFDKMLAYYAAKAGADVLARTEALDVIRKDGKIVGIKAKHEDEPVEIYADIIVAADGVESTIARKAGINTYAPPHEFDSGYEYEMLIEGFDPDLIHLWFGNEVAPRGYVWVFPKDEDRANVGIGINSDNPKTAKYYLDKWLEENNIPAKKLLEINVGLIPVGGFVKELAKDNVVVVGDAARQVNPMHGGGMAEAMEAGTIASKWIVKALEEENLSLLQNYTKEWWETDGKRLEKVLKVRRVTEKLTDEDLDLFIQILSGADAEKIASGDYAEVIKALLKHPKVLMSKRRLSLLKELL.

FAD is bound by residues A15, D34, C45, A46, A48, R97, A121, D276, and G288. Position 329 (R329) interacts with a 2,3-bis-O-(geranylgeranyl)-sn-glycerol 1-phospholipid.

The protein belongs to the geranylgeranyl reductase family. DGGGPL reductase subfamily. It depends on FAD as a cofactor.

The enzyme catalyses a 2,3-bis-O-phytanyl-sn-glycerol 1-phospholipid + 8 A = a 2,3-bis-O-(geranylgeranyl)-sn-glycerol 1-phospholipid + 8 AH2. It catalyses the reaction 2,3-bis-O-(phytanyl)-sn-glycerol 1-phosphate + 8 A = 2,3-bis-O-(geranylgeranyl)-sn-glycerol 1-phosphate + 8 AH2. The catalysed reaction is CDP-2,3-bis-O-(geranylgeranyl)-sn-glycerol + 8 AH2 = CDP-2,3-bis-O-(phytanyl)-sn-glycerol + 8 A. It carries out the reaction archaetidylserine + 8 AH2 = 2,3-bis-O-phytanyl-sn-glycero-3-phospho-L-serine + 8 A. It participates in membrane lipid metabolism; glycerophospholipid metabolism. Is involved in the reduction of 2,3-digeranylgeranylglycerophospholipids (unsaturated archaeols) into 2,3-diphytanylglycerophospholipids (saturated archaeols) in the biosynthesis of archaeal membrane lipids. Catalyzes the formation of archaetidic acid (2,3-di-O-phytanyl-sn-glyceryl phosphate) from 2,3-di-O-geranylgeranylglyceryl phosphate (DGGGP) via the hydrogenation of each double bond of the isoprenoid chains. Is also probably able to reduce double bonds of geranyl groups in CDP-2,3-bis-O-(geranylgeranyl)-sn-glycerol and archaetidylserine, thus acting at various stages in the biosynthesis of archaeal membrane lipids. The protein is Digeranylgeranylglycerophospholipid reductase of Thermococcus kodakarensis (strain ATCC BAA-918 / JCM 12380 / KOD1) (Pyrococcus kodakaraensis (strain KOD1)).